Reading from the N-terminus, the 262-residue chain is Ribose-5-phosphate isomerase A (262 aa).

Residues 33 to 36 (TGST), 89 to 92 (DGAD), and 102 to 105 (KGGG) each bind substrate. Glutamate 111 acts as the Proton acceptor in catalysis. Lysine 129 is a substrate binding site.

Belongs to the ribose 5-phosphate isomerase family. In terms of assembly, homodimer.

It catalyses the reaction aldehydo-D-ribose 5-phosphate = D-ribulose 5-phosphate. It participates in carbohydrate degradation; pentose phosphate pathway; D-ribose 5-phosphate from D-ribulose 5-phosphate (non-oxidative stage): step 1/1. Its function is as follows. Catalyzes the reversible conversion of ribose-5-phosphate to ribulose 5-phosphate. This Cereibacter sphaeroides (strain ATCC 17023 / DSM 158 / JCM 6121 / CCUG 31486 / LMG 2827 / NBRC 12203 / NCIMB 8253 / ATH 2.4.1.) (Rhodobacter sphaeroides) protein is Ribose-5-phosphate isomerase A.